Reading from the N-terminus, the 143-residue chain is S-protein homolog 11 (143 aa).

An N-terminal signal peptide occupies residues 1-20 (MNCFSFSFIIIVLCAGSSNA).

This sequence belongs to the plant self-incompatibility (S1) protein family.

It localises to the secreted. The chain is S-protein homolog 11 from Arabidopsis thaliana (Mouse-ear cress).